The sequence spans 685 residues: Stromal interaction molecule 1 (685 aa).

Residues 1–22 (MDVCVRLALWLLWGLLLHQGQS) form the signal peptide. Residues 23 to 213 (LSHSHSEKAT…LLTRHNHLKD (191 aa)) are Extracellular-facing. EF-hand domains are found at residues 64–97 (SFEAVRNIHKLMDDDANGDVDVEESDEFLREDLN) and 102–126 (TVKHSTFHGEDKLISVEDLWKAWKS). Positions 76, 78, 80, 82, and 87 each coordinate Ca(2+). Residues asparagine 131 and asparagine 171 are each glycosylated (N-linked (GlcNAc...) asparagine). The 69-residue stretch at 132-200 (WTVDEVVQWL…QLKALDTVLF (69 aa)) folds into the SAM domain. A helical membrane pass occupies residues 214–234 (FMLVVSIVIGVGGCWFAYIQN). Topologically, residues 235–685 (RYSKEHMKKM…LKIFKKPLKK (451 aa)) are cytoplasmic. The stretch at 248–442 (LEGLHRAEQS…IEILCGFQIV (195 aa)) forms a coiled coil. Residue serine 257 is modified to Phosphoserine. Residues 344–442 (PEALQKWLQL…IEILCGFQIV (99 aa)) are SOAR/CAD. Residues 475–483 (DDVDDMDEE) form a contributes to fast Ca(2+)-dependent inactivation of CRAC channels region. Residues 490-499 (MQSPSLQSSV) show a composition bias toward low complexity. A disordered region spans residues 490–542 (MQSPSLQSSVRQRLTEPQHGLGSQRDLTHSDSESSLHMSDRQRVAPKPPQMSR). Position 504 is a phosphothreonine (threonine 504). Serine 512 carries the post-translational modification Phosphoserine. Basic and acidic residues predominate over residues 515-532 (DLTHSDSESSLHMSDRQR). At threonine 517 the chain carries Phosphothreonine. Phosphoserine is present on residues serine 519, serine 521, serine 523, serine 524, serine 567, serine 575, serine 602, serine 608, serine 618, serine 621, and serine 628. Residues 596 to 685 (LMELSPSAPP…LKIFKKPLKK (90 aa)) form a disordered region. Residues 608 to 620 (SPHLDSSRSHSPS) show a composition bias toward low complexity. Residues 642-645 (TRIP) carry the Microtubule tip localization signal motif. Residues 655-666 (EEDNGSIGEETD) show a composition bias toward acidic residues. Serine 660 is subject to Phosphoserine. Threonine 665 is subject to Phosphothreonine. Position 668 is a phosphoserine (serine 668). Positions 670–685 (GRKKFPLKIFKKPLKK) are enriched in basic residues. Positions 672–685 (KKFPLKIFKKPLKK) are required for generation of inwardly rectifying CRAC currents.

As to quaternary structure, monomer in the presence of Ca(2+); it oligomerizes in absence of Ca(2+). Forms homooligomers and heterooligomers with STIM2. Interacts with pore-forming subunits of CRAC channels, ORAI1, ORAI2 and ORAI3; this interaction is potentiated upon Ca(2+) store depletion. Interacts (via the transmembrane region and the SOAR/CAD domain) with SPPL3; the interaction promotes the binding of STIM1 to ORAI1. Interacts (via the SOAR/CAD domain) with ORAI1. Interacts with MAPRE1; probably required for targeting to the growing microtubule plus ends. Interacts with CRACR2A/EFCAB4B; the interaction is direct and takes place in absence of Ca(2+). Forms a complex with CRACR2A/EFCAB4B and ORAI1 at low concentration of Ca(2+), the complex dissociates at elevated Ca(2+) concentrations. Interacts with SARAF, promoting a slow inactivation of STIM1-dependent SOCE activity, possibly by facilitating the deoligomerization of STIM1. Interacts with EFHB; the interaction takes place upon Ca(2+)-store depletion and inhibits the association with SARAF. Interacts with ASPH (isoform 8). Interacts with SLC35G1; intracellular Ca(2+)-dependent. May interact with ATP1A1, ATP2A2, ATP2B1, ATP2B4, KPNB1 and XPO1; through SLC35G1. Interacts with TMEM203. Interacts with STIMATE, promoting STIM1 conformational switch. Interacts with TMEM178A. Interacts with CASQ1 (via C-terminal end and preferentially with the monomeric form); this interaction increases in response to a depletion of intracellular Ca(2+), decreases both STIM1 aggregation and clustering, interaction of STIM1 with ORAI1 and store-operated Ca(2+) entry (SOCE) activity. Interacts with ADCY8. Post-translationally, glycosylation is required for cell surface expression. In terms of processing, phosphorylated predominantly on Ser residues. Ubiquitously expressed in various human primary cells and tumor cell lines.

It localises to the cell membrane. The protein localises to the endoplasmic reticulum membrane. The protein resides in the cytoplasm. Its subcellular location is the cytoskeleton. It is found in the sarcoplasmic reticulum. Functionally, acts as a Ca(2+) sensor that gates two major inward rectifying Ca(2+) channels at the plasma membrane: Ca(2+) release-activated Ca(2+) (CRAC) channels and arachidonate-regulated Ca(2+)-selective (ARC) channels. Plays a role in mediating store-operated Ca(2+) entry (SOCE), a Ca(2+) influx following depletion of intracellular Ca(2+) stores. Upon Ca(2+) depletion, translocates from the endoplasmic reticulum to the plasma membrane where it activates CRAC channel pore-forming subunits ORA1, ORA2 and ORAI3 to generate sustained and oscillatory Ca(2+) entry. Involved in enamel formation. The protein is Stromal interaction molecule 1 (STIM1) of Homo sapiens (Human).